We begin with the raw amino-acid sequence, 141 residues long: Granulocyte-macrophage colony-stimulating factor (141 aa).

Residues 1 to 17 (MWLQNLLFLGIVVYSLS) form the signal peptide. An O-linked (GalNAc...) serine glycan is attached at Ser-22. Thr-27 carries an O-linked (GalNAc...) threonine glycan. 2 cysteine pairs are disulfide-bonded: Cys-68/Cys-110 and Cys-102/Cys-135. 2 N-linked (GlcNAc...) asparagine glycosylation sites follow: Asn-83 and Asn-92.

Belongs to the GM-CSF family. As to quaternary structure, monomer. The signaling GM-CSF receptor complex is a dodecamer of two head-to-head hexamers of two alpha, two beta, and two ligand subunits.

It is found in the secreted. Cytokine that stimulates the growth and differentiation of hematopoietic precursor cells from various lineages, including granulocytes, macrophages, eosinophils and erythrocytes. The protein is Granulocyte-macrophage colony-stimulating factor (Csf2) of Mus musculus (Mouse).